Here is a 171-residue protein sequence, read N- to C-terminus: MHHVVSATTNPAKIQAILQAFNEIFGEGSCHIESVSVESGVPEQPFGSQETRAGARNRVENARCLRPQADFWVAIEAGIDDDSTFSWVVIENAAQRGEARSATLPLPAVILEKVRQGEALGPVMSQYTGIDEIGRKEGAIGVFTAGKLTRSSVYHQAVILALSPFHNAVYR.

8 to 13 (TTNPAK) contributes to the substrate binding site. Mg(2+) contacts are provided by glutamate 38 and glutamine 68.

It belongs to the YjjX NTPase family. Homodimer. Mg(2+) serves as cofactor. Mn(2+) is required as a cofactor.

It catalyses the reaction XTP + H2O = XDP + phosphate + H(+). The catalysed reaction is ITP + H2O = IDP + phosphate + H(+). Phosphatase that hydrolyzes non-canonical purine nucleotides such as XTP and ITP to their respective diphosphate derivatives. Probably excludes non-canonical purines from DNA/RNA precursor pool, thus preventing their incorporation into DNA/RNA and avoiding chromosomal lesions. The sequence is that of Inosine/xanthosine triphosphatase from Citrobacter koseri (strain ATCC BAA-895 / CDC 4225-83 / SGSC4696).